Here is a 90-residue protein sequence, read N- to C-terminus: UPF0297 protein ABC1593 (90 aa).

It belongs to the UPF0297 family.

This is UPF0297 protein ABC1593 from Shouchella clausii (strain KSM-K16) (Alkalihalobacillus clausii).